Here is a 159-residue protein sequence, read N- to C-terminus: Cyclic pyranopterin monophosphate synthase (159 aa).

Residues 75–77 (LCH) and 113–114 (ME) each bind substrate. Aspartate 128 is a catalytic residue.

This sequence belongs to the MoaC family. Homohexamer; trimer of dimers.

The catalysed reaction is (8S)-3',8-cyclo-7,8-dihydroguanosine 5'-triphosphate = cyclic pyranopterin phosphate + diphosphate. It participates in cofactor biosynthesis; molybdopterin biosynthesis. Its function is as follows. Catalyzes the conversion of (8S)-3',8-cyclo-7,8-dihydroguanosine 5'-triphosphate to cyclic pyranopterin monophosphate (cPMP). The sequence is that of Cyclic pyranopterin monophosphate synthase from Photorhabdus laumondii subsp. laumondii (strain DSM 15139 / CIP 105565 / TT01) (Photorhabdus luminescens subsp. laumondii).